Consider the following 205-residue polypeptide: Small ribosomal subunit protein uS4 (205 aa).

A compositionally biased stretch (basic residues) spans M1–D12. Residues M1–G49 form a disordered region. The S4 RNA-binding domain maps to R94–V155.

Belongs to the universal ribosomal protein uS4 family. In terms of assembly, part of the 30S ribosomal subunit. Contacts protein S5. The interaction surface between S4 and S5 is involved in control of translational fidelity.

Its function is as follows. One of the primary rRNA binding proteins, it binds directly to 16S rRNA where it nucleates assembly of the body of the 30S subunit. Functionally, with S5 and S12 plays an important role in translational accuracy. This is Small ribosomal subunit protein uS4 from Methylobacterium radiotolerans (strain ATCC 27329 / DSM 1819 / JCM 2831 / NBRC 15690 / NCIMB 10815 / 0-1).